The sequence spans 464 residues: Protein VAPYRIN-LIKE (464 aa).

One can recognise an MSP domain in the interval 3–124; that stretch reads RLVKTEFNEV…RDAVITVILV (122 aa). 9 ANK repeats span residues 153–182, 186–215, 217–246, 252–281, 285–314, 318–347, 349–368, 372–401, and 405–435; these read NLTNLMKPAVESGKVEYVTDLITAGGDVNF, NGKSLIPFAIRTGKLAVLKLLVANGCRIND, VDFVLHEAAIIDRVDVVKFLFESFCDELDV, EMMTPIHVSASEGHVSLIEFFVSIGGNANA, RRWTPLHHAASRNHLKAVEFLLENSDVKYA, NGKTAFEIASESGHTRLFGVLRWGDALLQA, RVDDVHALKKCLGEGAEVNR, NGWTPLHWASFKGRIKSVKVLLEHGAEVDS, and AGYTPLHCAAEAGHLQVALVLIAHGGCQTNL.

As to expression, expressed in roots.

It localises to the cytoplasm. The protein localises to the nucleus. Its subcellular location is the cell membrane. In terms of biological role, may be involved in arbuscular mycorrhizal (AM) symbiosis with AM fungi and in nitrogen-fixing rhizobial bacteria symbiosis leading to the formation of root nodules. This Medicago truncatula (Barrel medic) protein is Protein VAPYRIN-LIKE.